Consider the following 597-residue polypeptide: Proline--tRNA ligase (597 aa).

It belongs to the class-II aminoacyl-tRNA synthetase family. ProS type 1 subfamily. Homodimer.

Its subcellular location is the cytoplasm. The catalysed reaction is tRNA(Pro) + L-proline + ATP = L-prolyl-tRNA(Pro) + AMP + diphosphate. Catalyzes the attachment of proline to tRNA(Pro) in a two-step reaction: proline is first activated by ATP to form Pro-AMP and then transferred to the acceptor end of tRNA(Pro). As ProRS can inadvertently accommodate and process non-cognate amino acids such as alanine and cysteine, to avoid such errors it has two additional distinct editing activities against alanine. One activity is designated as 'pretransfer' editing and involves the tRNA(Pro)-independent hydrolysis of activated Ala-AMP. The other activity is designated 'posttransfer' editing and involves deacylation of mischarged Ala-tRNA(Pro). The misacylated Cys-tRNA(Pro) is not edited by ProRS. The protein is Proline--tRNA ligase of Bifidobacterium longum (strain NCC 2705).